Consider the following 1166-residue polypeptide: Reverse gyrase 2 (1166 aa).

Residues 1–40 (MINVMYKNSCPNCGGDISGDRLLNGLPCEACLPYINGIDD) form an RG N-terminal-type zinc finger. The Zn(2+) site is built by Cys10, Cys13, Cys28, and Cys31. ATP-binding positions include Gln92 and 109–116 (APTGLGKT). In terms of domain architecture, Helicase ATP-binding spans 96–285 (LRRLASNQSF…ALRLLTGFEP (190 aa)). A DEAD box motif is present at residues 190 to 193 (DDAD). Positions 576–1166 (FNISTGLLIV…VNPLKSEQNV (591 aa)) are topoisomerase I. Positions 580 to 743 (TGLLIVESPT…NVYRVVYHEI (164 aa)) constitute a Toprim domain. Glu586 provides a ligand contact to Mg(2+). The segment at 662-689 (IKKCLDCNKIFSSASDKCPYCGSANLQS) adopts an RG C-terminal-type zinc-finger fold. Residues Cys665, Cys668, Cys679, and Cys682 each coordinate Zn(2+). Asp712 is a Mg(2+) binding site. Residues 759–1157 (NTNLVMSQIV…EIFSEISTLV (399 aa)) form the Topo IA-type catalytic domain. Catalysis depends on Tyr903, which acts as the O-(5'-phospho-DNA)-tyrosine intermediate.

It in the N-terminal section; belongs to the DEAD box helicase family. DDVD subfamily. This sequence in the C-terminal section; belongs to the type IA topoisomerase family. Monomer. Zn(2+) is required as a cofactor. It depends on Mg(2+) as a cofactor.

The protein resides in the cytoplasm. It carries out the reaction ATP + H2O = ADP + phosphate + H(+). With respect to regulation, at least one of the 2 proteins is inhibited by actinomycin D. Less sensitive to NaCl than TopR1, maximal positive supercoiling is observed with 100 mM NaCl; as NaCl rises higher than 400 mM supercoiling decreases. At 600 mM NaCl relaxes but does not introduce positive supercoils into negatively supercoiled substrate. In terms of biological role, modifies the topological state of DNA by introducing positive supercoils in an ATP-dependent process. A highly processive enzyme, it introduces a large number of positive supercoils directly in a negatively supercoiled substrate. At 75 degrees Celsius introduces more than 23 positive supercoils into pTZ18R DNA (probably 2860 bp), more than TopR1; unlike TopR1 little to no relaxation of the negatively supercoiled substrate is seen in the presence of ATP, in the absence of ATP no activity is seen. At 45 degrees Celsius the enzyme is slower and in vitro individual steps can be detected. It cleaves transiently a single DNA strand and remains covalently bound to the 5' DNA end through a tyrosine residue. May be involved in DNA damage response. May be involved in rewinding the DNA strands in the regions of the chromosome that have opened up to allow transcription or replication. Functionally, there are 2 genes for this protein in the cell. During exponential growth this is the more highly expressed isoform (about 125 molecules per cell at 80 degrees Celsius, about 117 molecules at 88 degrees Celsius); this isoform is less active at higher temperature. Grows actively at both 80 and 88 degrees Celsius; survives a long exposure at 45 degrees Celsius without DNA replication or cell division occurring. Experiments using whole cell extracts do not distinguish which isoform is present, the results are probably a mixture of the two forms. This chain is Reverse gyrase 2, found in Saccharolobus solfataricus (strain ATCC 35092 / DSM 1617 / JCM 11322 / P2) (Sulfolobus solfataricus).